We begin with the raw amino-acid sequence, 948 residues long: Putative JmjC domain-containing histone demethylation protein 1 (948 aa).

The 160-residue stretch at 243–402 folds into the JmjC domain; it reads VSTTKLAYYV…PQLSIYNLEL (160 aa). Position 294 (Thr294) interacts with substrate. The Fe cation site is built by His297 and Glu299. Lys314 is a substrate binding site.

The protein belongs to the JHDM1 histone demethylase family. It depends on Fe(2+) as a cofactor.

Its subcellular location is the nucleus. The enzyme catalyses N(6),N(6)-dimethyl-L-lysyl(36)-[histone H3] + 2 2-oxoglutarate + 2 O2 = L-lysyl(36)-[histone H3] + 2 formaldehyde + 2 succinate + 2 CO2. In terms of biological role, may be a histone demethylase that specifically demethylates 'Lys-36' of histone H3, thereby playing a central role in histone code. Represses transcriptional silencing by negatively affecting heterochromatin stability. This is Putative JmjC domain-containing histone demethylation protein 1 (jhd1) from Schizosaccharomyces pombe (strain 972 / ATCC 24843) (Fission yeast).